We begin with the raw amino-acid sequence, 357 residues long: UDP-N-acetylglucosamine--N-acetylmuramyl-(pentapeptide) pyrophosphoryl-undecaprenol N-acetylglucosamine transferase (357 aa).

UDP-N-acetyl-alpha-D-glucosamine-binding positions include 14-16 (TAG), R168, S198, and Q292.

This sequence belongs to the glycosyltransferase 28 family. MurG subfamily.

The protein resides in the cell membrane. The enzyme catalyses di-trans,octa-cis-undecaprenyl diphospho-N-acetyl-alpha-D-muramoyl-L-alanyl-D-glutamyl-meso-2,6-diaminopimeloyl-D-alanyl-D-alanine + UDP-N-acetyl-alpha-D-glucosamine = di-trans,octa-cis-undecaprenyl diphospho-[N-acetyl-alpha-D-glucosaminyl-(1-&gt;4)]-N-acetyl-alpha-D-muramoyl-L-alanyl-D-glutamyl-meso-2,6-diaminopimeloyl-D-alanyl-D-alanine + UDP + H(+). The protein operates within cell wall biogenesis; peptidoglycan biosynthesis. In terms of biological role, cell wall formation. Catalyzes the transfer of a GlcNAc subunit on undecaprenyl-pyrophosphoryl-MurNAc-pentapeptide (lipid intermediate I) to form undecaprenyl-pyrophosphoryl-MurNAc-(pentapeptide)GlcNAc (lipid intermediate II). In Oceanobacillus iheyensis (strain DSM 14371 / CIP 107618 / JCM 11309 / KCTC 3954 / HTE831), this protein is UDP-N-acetylglucosamine--N-acetylmuramyl-(pentapeptide) pyrophosphoryl-undecaprenol N-acetylglucosamine transferase.